The sequence spans 186 residues: Large ribosomal subunit protein uL5 (186 aa).

Belongs to the universal ribosomal protein uL5 family. As to quaternary structure, part of the 50S ribosomal subunit; part of the 5S rRNA/L5/L18/L25 subcomplex. Contacts the 5S rRNA and the P site tRNA. Forms a bridge to the 30S subunit in the 70S ribosome.

In terms of biological role, this is one of the proteins that bind and probably mediate the attachment of the 5S RNA into the large ribosomal subunit, where it forms part of the central protuberance. In the 70S ribosome it contacts protein S13 of the 30S subunit (bridge B1b), connecting the 2 subunits; this bridge is implicated in subunit movement. Contacts the P site tRNA; the 5S rRNA and some of its associated proteins might help stabilize positioning of ribosome-bound tRNAs. The chain is Large ribosomal subunit protein uL5 from Maricaulis maris (strain MCS10) (Caulobacter maris).